The following is a 212-amino-acid chain: Chloramphenicol acetyltransferase (212 aa).

The active-site Proton acceptor is the H186.

This sequence belongs to the chloramphenicol acetyltransferase family. In terms of assembly, homotrimer.

The catalysed reaction is chloramphenicol + acetyl-CoA = chloramphenicol 3-acetate + CoA. Functionally, this enzyme is an effector of chloramphenicol resistance in bacteria. The chain is Chloramphenicol acetyltransferase (catD) from Clostridioides difficile (Peptoclostridium difficile).